Reading from the N-terminus, the 414-residue chain is Membrane protein UL43 (414 aa).

6 helical membrane passes run 39-59 (GFAH…VVLS), 61-81 (GPYA…LGFL), 96-116 (AWLR…GEAG), 121-141 (VPGP…LLVL), 148-168 (LFLL…VGGL), and 184-204 (AAAL…GDSF). The interval 225–253 (PRYAPEDAERPTDHGPLLPSTHHQRSPRV) is disordered. Residues 228–237 (APEDAERPTD) are compositionally biased toward basic and acidic residues. A run of 2 helical transmembrane segments spans residues 339–359 (GLMF…AVWI) and 383–403 (ATLR…GVLV).

This sequence belongs to the alphaherpesvirinae HHV-1 UL43 family.

It is found in the membrane. The sequence is that of Membrane protein UL43 from Homo sapiens (Human).